A 59-amino-acid polypeptide reads, in one-letter code: Large ribosomal subunit protein bL32 (59 aa).

Residues M1–D59 are disordered. Positions R7–R16 are enriched in basic residues.

It belongs to the bacterial ribosomal protein bL32 family.

This Hahella chejuensis (strain KCTC 2396) protein is Large ribosomal subunit protein bL32.